We begin with the raw amino-acid sequence, 52 residues long: Rubredoxin (52 aa).

The region spanning 1–52 (MKKYVCTVCGYEYDPAEGDPDNGVKPGTSFDDLPADWVCPVCGAPKSEFEAA) is the Rubredoxin-like domain. Residues Cys6, Cys9, Cys39, and Cys42 each contribute to the Fe cation site.

It belongs to the rubredoxin family. Fe(3+) serves as cofactor.

The protein resides in the cytoplasm. Rubredoxin is a small nonheme, iron protein lacking acid-labile sulfide. Its single Fe, chelated to 4 Cys, functions as an electron acceptor and may also stabilize the conformation of the molecule. Its function is as follows. Electron acceptor for cytoplasmic lactate dehydrogenase. The sequence is that of Rubredoxin (rub) from Nitratidesulfovibrio vulgaris (strain ATCC 29579 / DSM 644 / CCUG 34227 / NCIMB 8303 / VKM B-1760 / Hildenborough) (Desulfovibrio vulgaris).